Reading from the N-terminus, the 409-residue chain is Bone morphogenetic protein 4 (409 aa).

The first 19 residues, 1–19, serve as a signal peptide directing secretion; the sequence is MIPGNRMLMVVLLCQVLLG. The propeptide occupies 20-293; it reads GASHASLIPE…ALTRRRRAKR (274 aa). S91 carries the phosphoserine modification. N-linked (GlcNAc...) asparagine glycosylation is found at N144 and N209. The disordered stretch occupies residues 284–308; that stretch reads ALTRRRRAKRSPKHHPQRARKKNKN. Disulfide bonds link C309–C374, C338–C406, and C342–C408. Residues N351 and N366 are each glycosylated (N-linked (GlcNAc...) asparagine).

The protein belongs to the TGF-beta family. As to quaternary structure, homodimer; disulfide-linked. Interacts with GREM2. Part of a complex consisting of TWSG1 and CHRD. Interacts with the serine proteases, HTRA1 and HTRA3; the interaction with either inhibits BMP4-mediated signaling. The HTRA protease activity is required for this inhibition. Interacts with SOSTDC1. Interacts with FBN1 (via N-terminal domain) and FBN2. Interacts with type I receptor BMPR1A. Interacts with type II receptor BMPR2. Interacts with FSTL1; this interaction inhibits the activation of the BMP4/Smad1/5/8 signaling pathway. Interacts with TGFBR3.

Its subcellular location is the secreted. It localises to the extracellular space. The protein resides in the extracellular matrix. Functionally, growth factor of the TGF-beta superfamily that plays essential roles in many developmental processes, including neurogenesis, vascular development, angiogenesis and osteogenesis. Acts in concert with PTHLH/PTHRP to stimulate ductal outgrowth during embryonic mammary development and to inhibit hair follicle induction. Initiates the canonical BMP signaling cascade by associating with type I receptor BMPR1A and type II receptor BMPR2. Once all three components are bound together in a complex at the cell surface, BMPR2 phosphorylates and activates BMPR1A. In turn, BMPR1A propagates signal by phosphorylating SMAD1/5/8 that travel to the nucleus and act as activators and repressors of transcription of target genes. Positively regulates the expression of odontogenic development regulator MSX1 via inducing the IPO7-mediated import of SMAD1 to the nucleus. Required for MSX1-mediated mesenchymal molar tooth bud development beyond the bud stage, via promoting Wnt signaling. Acts as a positive regulator of odontoblast differentiation during mesenchymal tooth germ formation, expression is repressed during the bell stage by MSX1-mediated inhibition of CTNNB1 signaling. Able to induce its own expression in dental mesenchymal cells and also in the neighboring dental epithelial cells via an MSX1-mediated pathway. Can also signal through non-canonical BMP pathways such as ERK/MAP kinase, PI3K/Akt, or SRC cascades. For example, induces SRC phosphorylation which, in turn, activates VEGFR2, leading to an angiogenic response. The protein is Bone morphogenetic protein 4 of Suncus murinus (Asian house shrew).